Consider the following 369-residue polypeptide: Forkhead box protein I2-A (369 aa).

Positions 124 to 218 form a DNA-binding region, fork-head; that stretch reads RPPYSYSSLI…DNGNFRRKRK (95 aa). A disordered region spans residues 215-252; the sequence is RKRKRKSESVGAGFDEDSNEDKKPLALKSLGSDSPQGA.

Localized to the animal hemisphere of early cleavage stage embryos. Zygotic expression is restricted to the dorsal part of the epibranchial placodes of the head within a region located near the tip of the first, second and third visceral pouch.

Its subcellular location is the nucleus. Its function is as follows. Possible transcriptional activator. The chain is Forkhead box protein I2-A (foxi2-a) from Xenopus laevis (African clawed frog).